The sequence spans 143 residues: MSIIKEFKEFAVKGNVMDLAVGVIIGGAFSKIVDSVVKDLIMPVIGVLTGGLDFSNKFILLGTIPPSFKGNPDSFKDLQAAGVAAFGYGSFITVAINFVILAFIIFLMVKFINKLRKPAEAAPAATPEDVLLLREIRDSLKQR.

The next 2 helical transmembrane spans lie at 10 to 30 and 89 to 109; these read FAVK…GAFS and GSFI…FLMV.

This sequence belongs to the MscL family. In terms of assembly, homopentamer.

The protein localises to the cell inner membrane. Its function is as follows. Channel that opens in response to stretch forces in the membrane lipid bilayer. May participate in the regulation of osmotic pressure changes within the cell. In Burkholderia vietnamiensis (strain G4 / LMG 22486) (Burkholderia cepacia (strain R1808)), this protein is Large-conductance mechanosensitive channel.